Here is a 26-residue protein sequence, read N- to C-terminus: uncharacterized protein (26 aa).

Belongs to the asfivirus E66L family.

This is an uncharacterized protein from Ornithodoros (relapsing fever ticks).